The chain runs to 462 residues: L-seryl-tRNA(Sec) selenium transferase (462 aa).

At Lys-292 the chain carries N6-(pyridoxal phosphate)lysine.

This sequence belongs to the SelA family. Pyridoxal 5'-phosphate is required as a cofactor.

The protein localises to the cytoplasm. It carries out the reaction L-seryl-tRNA(Sec) + selenophosphate + H(+) = L-selenocysteinyl-tRNA(Sec) + phosphate. It participates in aminoacyl-tRNA biosynthesis; selenocysteinyl-tRNA(Sec) biosynthesis; selenocysteinyl-tRNA(Sec) from L-seryl-tRNA(Sec) (bacterial route): step 1/1. Its function is as follows. Converts seryl-tRNA(Sec) to selenocysteinyl-tRNA(Sec) required for selenoprotein biosynthesis. The protein is L-seryl-tRNA(Sec) selenium transferase of Geotalea daltonii (strain DSM 22248 / JCM 15807 / FRC-32) (Geobacter daltonii).